The following is a 524-amino-acid chain: Decreased expression in renal and prostate cancer protein (524 aa).

Residues 1–12 (MKEPRIFPRERP) are compositionally biased toward basic and acidic residues. 2 disordered regions span residues 1–43 (MKEP…TGHP) and 64–252 (PFPR…LDAR). Residues 129-148 (LNPRTGALPGPGPLSNPRLG) show a composition bias toward low complexity. A compositionally biased stretch (gly residues) spans 163–181 (GLLGAGPDPRGGGPMGPGS). Phosphoserine is present on S302. Over residues 312-323 (PMGPNSGPSSRG) the composition is skewed to low complexity. Residues 312–332 (PMGPNSGPSSRGIGLPGPNPS) are disordered. An Asymmetric dimethylarginine modification is found at R364. At R387 the chain carries Omega-N-methylarginine. The residue at position 423 (S423) is a Phosphoserine.

It belongs to the DERPC family. As to expression, ubiquitously expressed, with abundant expression in kidney, skeletal muscle, testis, liver, ovary, and heart and moderate expression in prostate. Expression is significantly reduced in renal and prostate tumors. No differential expression in breast cancer cells, between lobular carcinoma and normal lobules.

Its subcellular location is the nucleus. In terms of biological role, potential tumor suppressor. Inhibits prostate tumor cell growth, when overexpressed. The chain is Decreased expression in renal and prostate cancer protein from Homo sapiens (Human).